The sequence spans 892 residues: Iodate reductase subunit IdrA (892 aa).

Residues cysteine 27, cysteine 30, and cysteine 34 each coordinate [3Fe-4S] cluster. Positions 431–442 (RGGGHQRGGLSA) are enriched in gly residues. The interval 431–452 (RGGGHQRGGLSAGGNSEWLSPE) is disordered.

The protein belongs to the prokaryotic molybdopterin-containing oxidoreductase family. As to quaternary structure, the iodate reductase (Idr) complex is composed of a molybdopterin-dependent iodate reductase (IdrA and IdrB subunits) and two associated peroxidases (IdrP1 and IdrP2). [3Fe-4S] cluster serves as cofactor. Mo-bis(molybdopterin guanine dinucleotide) is required as a cofactor.

Its subcellular location is the periplasm. Its function is as follows. Involved in iodate respiration. Probably catalyzes the reduction of iodate (IO(3)(-)) to hypoiodous acid (HIO) and H(2)O(2), using a reduced cytochrome c as the electron donor. In Pseudomonas sp. (strain SCT), this protein is Iodate reductase subunit IdrA.